The primary structure comprises 465 residues: Argininosuccinate lyase (465 aa).

This sequence belongs to the lyase 1 family. Argininosuccinate lyase subfamily.

Its subcellular location is the cytoplasm. It catalyses the reaction 2-(N(omega)-L-arginino)succinate = fumarate + L-arginine. It functions in the pathway amino-acid biosynthesis; L-arginine biosynthesis; L-arginine from L-ornithine and carbamoyl phosphate: step 3/3. The sequence is that of Argininosuccinate lyase from Clostridium botulinum (strain Alaska E43 / Type E3).